The following is a 462-amino-acid chain: Myb-like transcriptional regulator mfmK (462 aa).

HTH myb-type domains lie at 1–54 (MARL…WWNS), 56–110 (ADGT…DPGI), and 113–162 (CDWT…LKHE). 3 DNA-binding regions (H-T-H motif) span residues 32–52 (WRDL…RRWW), 83–106 (WSRV…SQVL), and 134–158 (WATI…STLR). A compositionally biased stretch (basic and acidic residues) spans 159-175 (LKHENESKRESTIRKSV). 3 disordered regions span residues 159-184 (LKHE…NFEP), 216-262 (DEEE…VDNG), and 374-408 (STTT…RTSI). The segment covering 216–235 (DEEEDDDDDDEDNEEDDGDD) has biased composition (acidic residues). Composition is skewed to polar residues over residues 374-385 (STTTGMDSSSAP) and 396-408 (FGTS…RTSI).

It localises to the nucleus. Myb-like transcriptional regulator; part of the gene cluster that mediates the biosynthesis of the phthalide-terpenoid hybrid 11'-O-desmethylfendlerol. The sequence is that of Myb-like transcriptional regulator mfmK from Annulohypoxylon moriforme (Filamentous fungus).